Consider the following 80-residue polypeptide: ATP synthase subunit c (80 aa).

Helical transmembrane passes span 11-31 and 53-73; these read MAAA…IGIL and FFVV…LGLY.

It belongs to the ATPase C chain family. In terms of assembly, F-type ATPases have 2 components, F(1) - the catalytic core - and F(0) - the membrane proton channel. F(1) has five subunits: alpha(3), beta(3), gamma(1), delta(1), epsilon(1). F(0) has three main subunits: a(1), b(2) and c(10-14). The alpha and beta chains form an alternating ring which encloses part of the gamma chain. F(1) is attached to F(0) by a central stalk formed by the gamma and epsilon chains, while a peripheral stalk is formed by the delta and b chains.

It is found in the cell inner membrane. F(1)F(0) ATP synthase produces ATP from ADP in the presence of a proton or sodium gradient. F-type ATPases consist of two structural domains, F(1) containing the extramembraneous catalytic core and F(0) containing the membrane proton channel, linked together by a central stalk and a peripheral stalk. During catalysis, ATP synthesis in the catalytic domain of F(1) is coupled via a rotary mechanism of the central stalk subunits to proton translocation. In terms of biological role, key component of the F(0) channel; it plays a direct role in translocation across the membrane. A homomeric c-ring of between 10-14 subunits forms the central stalk rotor element with the F(1) delta and epsilon subunits. The sequence is that of ATP synthase subunit c from Erwinia tasmaniensis (strain DSM 17950 / CFBP 7177 / CIP 109463 / NCPPB 4357 / Et1/99).